A 327-amino-acid polypeptide reads, in one-letter code: GDP-mannose transporter (327 aa).

The Cytoplasmic portion of the chain corresponds to 1–4 (MESS). A helical membrane pass occupies residues 5-25 (LAAIANSGPISIFSYCVSSIL). The Lumenal segment spans residues 26-36 (MTVTNKYVLSG). A helical membrane pass occupies residues 37 to 57 (FSFNMNFLLLAVQSIVCIVTI). The Cytoplasmic portion of the chain corresponds to 58–78 (GSLKSFGVITYRQFNKEEARK). A helical transmembrane segment spans residues 79–93 (WSPIAVLLVIMIYTS). At 94 to 102 (SKALQYLSI) the chain is on the lumenal side. The helical transmembrane segment at 103–125 (PVYTIFKNLTIILIAYGEVLWFG) threads the bilayer. The Cytoplasmic segment spans residues 126-131 (GKVTTM). A helical membrane pass occupies residues 132–149 (ALSSFLLMVFSSVVAWYG). Residues 150–163 (DEAVSGSGNESFIA) are Lumenal-facing. N158 is a glycosylation site (N-linked (GlcNAc...) asparagine). A helical transmembrane segment spans residues 164–184 (LYLGYFWMATNCFASAAFVLI). The Cytoplasmic portion of the chain corresponds to 185–207 (MRKRIKLTNFKDFDTMYYNNLLS). Residues 208–228 (IPILLASSIIFEDWSAENLAV) traverse the membrane as a helical segment. Over 229-238 (NFPSDNRTAT) the chain is Lumenal. A glycan (N-linked (GlcNAc...) asparagine) is linked at N234. Residues 239 to 259 (IAAMVLSGASSVGISYCSAWC) form a helical membrane-spanning segment. Residues 260–266 (VRVTSST) lie on the Cytoplasmic side of the membrane. A helical transmembrane segment spans residues 267–289 (TYSMVGALNKLPIALSGLVFFPA). Residues 290 to 292 (AVN) are Lumenal-facing. Residues 293–312 (FWSVASIFVGFAAGLVYAVA) traverse the membrane as a helical segment. At 313–327 (KQRQQKENVSLPSSK) the chain is on the cytoplasmic side.

Belongs to the TPT transporter family. SLC35D subfamily. In terms of assembly, homooligomer.

The protein resides in the golgi apparatus membrane. The protein localises to the cytoplasmic vesicle membrane. It localises to the endoplasmic reticulum membrane. Involved in the import of GDP-mannose from the cytoplasm into the Golgi lumen. This chain is GDP-mannose transporter (VRG4), found in Scheffersomyces stipitis (strain ATCC 58785 / CBS 6054 / NBRC 10063 / NRRL Y-11545) (Yeast).